Consider the following 326-residue polypeptide: uncharacterized protein (326 aa).

Helical transmembrane passes span 9–29 and 33–53; these read WVVL…RWSL and ISIC…ANSY. Residues Asp-120, Asn-148, Tyr-214, Lys-218, and Thr-252 each coordinate NADP(+). Tyr-214 (proton acceptor) is an active-site residue. Lys-218 serves as the catalytic Lowers pKa of active site Tyr.

Belongs to the short-chain dehydrogenases/reductases (SDR) family.

It is found in the mitochondrion membrane. Its function is as follows. Involved in the resistance to DNA-damaging agents. This is an uncharacterized protein from Saccharomyces cerevisiae (strain ATCC 204508 / S288c) (Baker's yeast).